Here is a 209-residue protein sequence, read N- to C-terminus: Large ribosomal subunit protein uL3 (209 aa).

Residues S127 to R152 are disordered. Polar residues predominate over residues S143–R152.

Belongs to the universal ribosomal protein uL3 family. Part of the 50S ribosomal subunit. Forms a cluster with proteins L14 and L19.

Functionally, one of the primary rRNA binding proteins, it binds directly near the 3'-end of the 23S rRNA, where it nucleates assembly of the 50S subunit. The polypeptide is Large ribosomal subunit protein uL3 (Borrelia hermsii (strain HS1 / DAH)).